Consider the following 90-residue polypeptide: Chaplin-G (90 aa).

Residues 1–27 (MSRIAKAAGVALGTGAVVLSGTGMAMA) form the signal peptide. One can recognise a Chaplin domain in the interval 38–78 (SPGVLSGNVVQVPVHVPVNLCGNTIDVIGLLNPAFGNACEN). Cysteines 58 and 76 form a disulfide.

The protein belongs to the chaplin family. Short chaplin subfamily.

It localises to the cell surface. It is found in the secreted. The protein localises to the cell wall. Functionally, one of 8 partially redundant surface-active proteins required for efficient formation of aerial mycelium; the short chaplins assemble into a hydrophobic, amyloidal fibrillar surface layer that envelopes and protects aerial hyphae and spores, presumably anchored to the long chaplins. Chaplins have an overlapping function with the surface-active SapB peptide; chaplins are essential on minimal medium while on rich medium both chaplins and SapB are required for efficient aerial hyphae formation. Chaplins are also involved in cell attachment to a hydrophobic surface. Forms amyloid fibrils in vitro probably composed of stacked beta-sheets, at low extracellular concentrations individually restores the ability to form aerial hyphae to a chaplin-deficient strain. A small chaplin extract (ChpD, ChpE, ChpF, ChpG and ChpH) self-assembles into 2 different amyloids; small fibrils at the air-water interface form an amphipathic membrane that resembles spore-surface structures involved in aerial hyphae formation, and hydrophilic fibrils in solution that resemble the fibers that attach cells to a hydrophobic surface. At the air-water interface the hydrophilic surface is in contact with water (probably equivalent to the peptidoglycan layer), while the hydrophobic face is exposed to the air, making the surface of the aerial hyphae hydrophobic. A small chaplin extract applied to a chaplin-deficient strain restores aerial hyphae formation. The small chaplin extract forms an amyloid-like structure similar to that seen on the surface of cells without rodlets (rdlA-rdlB deletions), and is highly surface active, reducing surface tension from 72 to 26 mJ/m(2), which probably allows escape of hyphae from an aqueous environment into air. ChpF and ChpG are sufficient to restore the rodlet layer and hydrophobicity to a strain deleted for the other 6 chaplin genes. This Streptomyces coelicolor (strain ATCC BAA-471 / A3(2) / M145) protein is Chaplin-G.